The chain runs to 211 residues: tRNA (guanosine(18)-2'-O)-methyltransferase (211 aa).

Positions 103, 146, and 155 each coordinate S-adenosyl-L-methionine.

The protein belongs to the class IV-like SAM-binding methyltransferase superfamily. RNA methyltransferase TrmH family. In terms of assembly, homodimer.

The catalysed reaction is guanosine(18) in tRNA + S-adenosyl-L-methionine = 2'-O-methylguanosine(18) in tRNA + S-adenosyl-L-homocysteine + H(+). Functionally, catalyzes the 2'-O methylation of guanosine at position 18 in tRNA. Type II methylase, which methylates only a subset of tRNA species. The polypeptide is tRNA (guanosine(18)-2'-O)-methyltransferase (Aquifex aeolicus (strain VF5)).